A 660-amino-acid chain; its full sequence is Bifunctional polymyxin resistance protein ArnA (660 aa).

A formyltransferase ArnAFT region spans residues methionine 1–leucine 304. The active-site Proton donor; for formyltransferase activity is the histidine 104. Residues arginine 114 and valine 136–aspartate 140 each bind (6R)-10-formyltetrahydrofolate. A dehydrogenase ArnADH region spans residues arginine 314–serine 660. NAD(+) contacts are provided by residues aspartate 347 and aspartate 368–isoleucine 369. UDP-alpha-D-glucuronate-binding positions include alanine 393, tyrosine 398, and threonine 432–serine 433. Catalysis depends on glutamate 434, which acts as the Proton acceptor; for decarboxylase activity. Residues arginine 460, asparagine 492, lysine 526–arginine 535, and tyrosine 613 contribute to the UDP-alpha-D-glucuronate site. Catalysis depends on arginine 619, which acts as the Proton donor; for decarboxylase activity.

It in the N-terminal section; belongs to the Fmt family. UDP-L-Ara4N formyltransferase subfamily. This sequence in the C-terminal section; belongs to the NAD(P)-dependent epimerase/dehydratase family. UDP-glucuronic acid decarboxylase subfamily. As to quaternary structure, homohexamer, formed by a dimer of trimers.

It carries out the reaction UDP-alpha-D-glucuronate + NAD(+) = UDP-beta-L-threo-pentopyranos-4-ulose + CO2 + NADH. The enzyme catalyses UDP-4-amino-4-deoxy-beta-L-arabinose + (6R)-10-formyltetrahydrofolate = UDP-4-deoxy-4-formamido-beta-L-arabinose + (6S)-5,6,7,8-tetrahydrofolate + H(+). It participates in nucleotide-sugar biosynthesis; UDP-4-deoxy-4-formamido-beta-L-arabinose biosynthesis; UDP-4-deoxy-4-formamido-beta-L-arabinose from UDP-alpha-D-glucuronate: step 1/3. The protein operates within nucleotide-sugar biosynthesis; UDP-4-deoxy-4-formamido-beta-L-arabinose biosynthesis; UDP-4-deoxy-4-formamido-beta-L-arabinose from UDP-alpha-D-glucuronate: step 3/3. It functions in the pathway bacterial outer membrane biogenesis; lipopolysaccharide biosynthesis. Its function is as follows. Bifunctional enzyme that catalyzes the oxidative decarboxylation of UDP-glucuronic acid (UDP-GlcUA) to UDP-4-keto-arabinose (UDP-Ara4O) and the addition of a formyl group to UDP-4-amino-4-deoxy-L-arabinose (UDP-L-Ara4N) to form UDP-L-4-formamido-arabinose (UDP-L-Ara4FN). The modified arabinose is attached to lipid A and is required for resistance to polymyxin and cationic antimicrobial peptides. The chain is Bifunctional polymyxin resistance protein ArnA (arnA) from Salmonella typhimurium (strain LT2 / SGSC1412 / ATCC 700720).